We begin with the raw amino-acid sequence, 400 residues long: Elongation factor Tu-B (400 aa).

The tr-type G domain occupies 10–209; that stretch reads KPHVNVGTIG…VVDEYIPTPE (200 aa). A G1 region spans residues 19 to 26; that stretch reads GHVDHGKT. 19–26 contacts GTP; sequence GHVDHGKT. Thr26 is a Mg(2+) binding site. Residues 60 to 64 are G2; sequence GITIN. The G3 stretch occupies residues 81 to 84; that stretch reads DCPG. GTP-binding positions include 81–85 and 136–139; these read DCPGH and NKAD. Residues 136–139 form a G4 region; that stretch reads NKAD. A G5 region spans residues 174–176; sequence SAL.

The protein belongs to the TRAFAC class translation factor GTPase superfamily. Classic translation factor GTPase family. EF-Tu/EF-1A subfamily. In terms of assembly, monomer.

The protein resides in the cytoplasm. It catalyses the reaction GTP + H2O = GDP + phosphate + H(+). In terms of biological role, GTP hydrolase that promotes the GTP-dependent binding of aminoacyl-tRNA to the A-site of ribosomes during protein biosynthesis. This Caldanaerobacter subterraneus subsp. tengcongensis (strain DSM 15242 / JCM 11007 / NBRC 100824 / MB4) (Thermoanaerobacter tengcongensis) protein is Elongation factor Tu-B.